The following is a 29-amino-acid chain: Alpha-amylase inhibitor 2 (29 aa).

The protein belongs to the protease inhibitor I6 (cereal trypsin/alpha-amylase inhibitor) family.

It is found in the secreted. Functionally, alpha-amylase inhibitor. The sequence is that of Alpha-amylase inhibitor 2 from Saussurea costus (Costus).